We begin with the raw amino-acid sequence, 302 residues long: Sushi domain-containing protein 6 (302 aa).

Positions 1 to 39 (MCHGKIAPKSSSEFVVTSVGHGVFLQLVILCALLGDGLA) are cleaved as a signal peptide. One can recognise a Sushi domain in the interval 40–104 (SVCPLPPEPE…TPAMEVSCHL (65 aa)). Disulfide bonds link C42/C89 and C74/C102. Residues 120–140 (IVASTASSVALILLLVVLFVL) traverse the membrane as a helical segment. 2 disordered regions span residues 202-241 (GSAPSGRNMPREQQLQGQEACSSAGGEDEAPGHSGLCEAW) and 256-302 (TSSW…LKEA). Polar residues-rich tracts occupy residues 212–222 (REQQLQGQEAC), 256–267 (TSSWVAGSGSSR), and 279–290 (SDIQSLLSLTSE).

It is found in the membrane. Its function is as follows. May play a role in growth-suppressive activity and cell death. May be involved in the production of chemokine molecules in umbilical vein endothelial cells (HUVECs) cultured in THP1 monocyte LPS-induced medium. Plays a role in preventing tumor onset. This Mus musculus (Mouse) protein is Sushi domain-containing protein 6.